We begin with the raw amino-acid sequence, 457 residues long: Protein unc-93 homolog A (457 aa).

A run of 5 helical transmembrane segments spans residues 8 to 28 (VLVLSFGFLLLFTAYGGLQSL), 42 to 62 (ALSTLYGGMLLSSMFLPPVLI), 65 to 85 (LGCKWTLVLAMCCYVAFSLGN), 86 to 106 (FYASWYTLIPASVLVGLGAAA), and 140 to 160 (IFFLIFQSSGVWGNLISSLVF). The N-linked (GlcNAc...) asparagine glycan is linked to Asn-190. Helical transmembrane passes span 202–222 (TLLGIYTGCGFLAVLLMAVFL), 257–277 (LRLLILLPMLSGFEQAFLSGD), 291–311 (FVGYVMICFGAADALCSVLFG), 320–340 (TVLFALGAVTQLACIIALLLW), 344–364 (PSQLPVFFVFPSLWGMADAVW), and 395–415 (FVIAFGYSTFLCVSVKLYVLL). The tract at residues 438–457 (GPLAAGRTKPAEDGATQTKL) is disordered.

Belongs to the unc-93 family.

It is found in the cell membrane. This chain is Protein unc-93 homolog A (UNC93A), found in Bos taurus (Bovine).